A 218-amino-acid chain; its full sequence is Chromophore lyase CpcT/CpeT 1 (218 aa).

The protein belongs to the CpcT/CpeT biliprotein lyase family.

Functionally, covalently attaches a chromophore to Cys residue(s) of phycobiliproteins. The chain is Chromophore lyase CpcT/CpeT 1 from Synechococcus sp. (strain JA-3-3Ab) (Cyanobacteria bacterium Yellowstone A-Prime).